Reading from the N-terminus, the 507-residue chain is MVTIQADEISNIIRERIEQYNREVKIVNTGTVLQVGDGIARIHGLDEVMAGELVEFEEGTIGIALNLESNNVGVVLMGDGLMIQEGSSVKATGRIAQIPVSEGYLGRVINALAKPIDGRGEISASESRLIESPAPGIISRRSVYEPLQTGLIAIDSMIPIGRGQRELIIGDRQTGKTAVATDTILNQKGQNVICVYVAIGQKASSVAQVVTTFQERGAMEYTIVVAETADSPATLQYLAPYTGAALAEYFMYRERHTSIIYDDPSKQAQAYRQMSLLLRRPPGREAYPGDVFYLHSRLLERAAKSSSRLGEGSMTALPIVETQSGDVSAYIPTNVISITDGQIFLSADLFNAGIRPAINVGISVSRVGSAAQIKAMKQVAGKSKLELAQFAELEAFAQFASDLDKATQNQLARGQRLRELLKQSQSAPLTVEEQIVTIYTGTNGYLDSLEIGQVKKFLVQLRTYLKTNKPQFQEIISSTKTFTEEAEALLKEAIQEQMERFLLQEQT.

ATP is bound at residue 170 to 177; that stretch reads GDRQTGKT.

The protein belongs to the ATPase alpha/beta chains family. F-type ATPases have 2 components, CF(1) - the catalytic core - and CF(0) - the membrane proton channel. CF(1) has five subunits: alpha(3), beta(3), gamma(1), delta(1), epsilon(1). CF(0) has four main subunits: a, b, b' and c.

The protein resides in the plastid. It localises to the chloroplast thylakoid membrane. The catalysed reaction is ATP + H2O + 4 H(+)(in) = ADP + phosphate + 5 H(+)(out). Produces ATP from ADP in the presence of a proton gradient across the membrane. The alpha chain is a regulatory subunit. In Buxus microphylla (Littleleaf boxwood), this protein is ATP synthase subunit alpha, chloroplastic.